The sequence spans 615 residues: Dihydroxy-acid dehydratase (615 aa).

Asp-85 is a binding site for Mg(2+). Residue Cys-126 coordinates [2Fe-2S] cluster. Asp-127 and Lys-128 together coordinate Mg(2+). Lys-128 is subject to N6-carboxylysine. Position 199 (Cys-199) interacts with [2Fe-2S] cluster. Residue Glu-495 coordinates Mg(2+). The Proton acceptor role is filled by Ser-521.

It belongs to the IlvD/Edd family. In terms of assembly, homodimer. Requires [2Fe-2S] cluster as cofactor. The cofactor is Mg(2+).

The catalysed reaction is (2R)-2,3-dihydroxy-3-methylbutanoate = 3-methyl-2-oxobutanoate + H2O. It catalyses the reaction (2R,3R)-2,3-dihydroxy-3-methylpentanoate = (S)-3-methyl-2-oxopentanoate + H2O. Its pathway is amino-acid biosynthesis; L-isoleucine biosynthesis; L-isoleucine from 2-oxobutanoate: step 3/4. It functions in the pathway amino-acid biosynthesis; L-valine biosynthesis; L-valine from pyruvate: step 3/4. Functions in the biosynthesis of branched-chain amino acids. Catalyzes the dehydration of (2R,3R)-2,3-dihydroxy-3-methylpentanoate (2,3-dihydroxy-3-methylvalerate) into 2-oxo-3-methylpentanoate (2-oxo-3-methylvalerate) and of (2R)-2,3-dihydroxy-3-methylbutanoate (2,3-dihydroxyisovalerate) into 2-oxo-3-methylbutanoate (2-oxoisovalerate), the penultimate precursor to L-isoleucine and L-valine, respectively. The chain is Dihydroxy-acid dehydratase from Mannheimia succiniciproducens (strain KCTC 0769BP / MBEL55E).